The following is a 58-amino-acid chain: Mesomartoxin (58 aa).

The N-terminal stretch at 1–29 is a signal peptide; the sequence is MMSRLSVFILIALVLSVIIDVLNNSKVEG. 3 disulfides stabilise this stretch: C31–C49, C35–C54, and C39–C56.

The protein belongs to the short scorpion toxin superfamily. Potassium channel inhibitor family. Alpha-KTx 26 subfamily. In terms of tissue distribution, expressed by the venom gland.

The protein localises to the secreted. In terms of biological role, recombinant toxin that reversibly blocks the voltage-gated potassium channels Shaker (IC(50)=0.054 nM), rKv1.2/KCNA2 (IC(50)=15.6 nM), and rKv1.3/KCNA3 (IC(50)=12.5 uM). The chain is Mesomartoxin from Olivierus martensii (Manchurian scorpion).